We begin with the raw amino-acid sequence, 431 residues long: Acrosin (431 aa).

Positions 1 to 16 are cleaved as a signal peptide; the sequence is MLPTAVLLVLVVSVVA. Residue Asn19 is glycosylated (N-linked (GlcNAc...) asparagine). Disulfide bonds link Cys22-Cys152, Cys26-Cys160, Cys71-Cys87, Cys175-Cys244, Cys207-Cys223, and Cys234-Cys264. The region spanning 40 to 288 is the Peptidase S1 domain; it reads VVGGQAAQQG…FLDWIASRIG (249 aa). Catalysis depends on charge relay system residues His86 and Asp140. Residue Asn208 is glycosylated (N-linked (GlcNAc...) asparagine). Residue Ser238 is the Charge relay system of the active site. The tract at residues 295-385 is disordered; sequence IQPATPTPPT…PPPASTKPPQ (91 aa). A compositionally biased stretch (basic residues) spans 331–341; that stretch reads PHPHPHPHPHP. Pro residues predominate over residues 342 to 381; sequence RPPQPPAAQAPPPPPPPPPPPPPPPPPPPPPPPPPPPAST. The propeptide at 351–431 is pro-rich; that stretch reads APPPPPPPPP…TEIPEVTLAS (81 aa).

The protein belongs to the peptidase S1 family. Heavy chain (catalytic) and a light chain linked by two disulfide bonds. Forms a heterodimer with SERPINA5.

The catalysed reaction is Preferential cleavage: Arg-|-Xaa, Lys-|-Xaa.. Its activity is regulated as follows. Inhibited by SERPINA5. Its function is as follows. Acrosin is the major protease of mammalian spermatozoa. It is a serine protease of trypsin-like cleavage specificity, it is synthesized in a zymogen form, proacrosin and stored in the acrosome. This Oryctolagus cuniculus (Rabbit) protein is Acrosin (ACR).